Here is a 100-residue protein sequence, read N- to C-terminus: Small ribosomal subunit protein uS14c (100 aa).

It belongs to the universal ribosomal protein uS14 family. In terms of assembly, part of the 30S ribosomal subunit.

Its subcellular location is the plastid. The protein localises to the chloroplast. Binds 16S rRNA, required for the assembly of 30S particles. The protein is Small ribosomal subunit protein uS14c of Chlamydomonas reinhardtii (Chlamydomonas smithii).